We begin with the raw amino-acid sequence, 321 residues long: Torsin-2A (321 aa).

An N-terminal signal peptide occupies residues 1 to 26 (MAAATRGCRPWGSLLGLLGLVSAAAA). Position 93 to 100 (93 to 100 (GWTGTGKS)) interacts with ATP. Asparagine 149 carries N-linked (GlcNAc...) asparagine glycosylation.

This sequence belongs to the ClpA/ClpB family. Torsin subfamily. In terms of assembly, homohexamer. Interacts with TOR1AIP1. As to expression, isoform 1 is expressed ubiquitously, except in cardiac and endothelial tissues.

The protein resides in the endoplasmic reticulum lumen. The protein is Torsin-2A (TOR2A) of Homo sapiens (Human).